A 263-amino-acid chain; its full sequence is Zinc transporter ZupT (263 aa).

5 consecutive transmembrane segments (helical) span residues 1 to 21 (MLFAFGLTLFAGLATGIGGLI), 37 to 57 (LGFSVGVMLYVSFVEILPGAF), 68 to 88 (GGSWAAVIGFFGGIALIAIID), 116 to 136 (MMKMGVLTALAIAIHNFPEGF), and 138 to 158 (TFLAGLSDPMIAIPVAVAIAI). Fe(2+) contacts are provided by Asn-131 and Glu-134. Glu-134 provides a ligand contact to Zn(2+). His-159 lines the Zn(2+) pocket. Residues Asn-160, Glu-163, and Glu-192 each coordinate Fe(2+). Glu-163 contacts Zn(2+). Transmembrane regions (helical) follow at residues 184-204 (WATLSGLAEPAGALIGFLLLM), 206-226 (FIGPEALGLCFAAVAGVMVFI), and 243-263 (TAIYGLIAGMAVMAISLLLFI).

It belongs to the ZIP transporter (TC 2.A.5) family. ZupT subfamily.

It localises to the cell membrane. The enzyme catalyses Zn(2+)(in) = Zn(2+)(out). Mediates zinc uptake. May also transport other divalent cations. The sequence is that of Zinc transporter ZupT from Corynebacterium glutamicum (strain ATCC 13032 / DSM 20300 / JCM 1318 / BCRC 11384 / CCUG 27702 / LMG 3730 / NBRC 12168 / NCIMB 10025 / NRRL B-2784 / 534).